The following is a 398-amino-acid chain: MPSHLDQTLAAALSERRAQYRYRQRKLLQSPQTPELVVDGKTYLAFCSNDYLGLANHPQVIAAQQQAAARWGAGSGASHLVAGHTQEHHALEEELAAFTGRQRALLFSTGYMANLGVISTLVGQGDGVFEDRLNHASLLDGGLLSGARFQRFLHSDINNLQARLRKTDAARKLVVVDGVFSMDGDCAPLPQLAQVCAQENAWLMVDDAHGFGVLGETGAGTCEHFGLDQQQVPVLMGTLGKALGSFGAFVAGSETLIETLINFARPYIYTTAMPPPVAAATRASLRLVQSEAWRRTHVQQLIAQFRNGAQDLGLQLMDSFSPVQPLLVGSEAKALAIAEALAHRGILIIAIRPPTVPVGSSRLRITLSAAHTEAQVAQLLDVLGEVMNSTAIRGLADD.

Arginine 23 lines the substrate pocket. 110 to 111 (GY) contributes to the pyridoxal 5'-phosphate binding site. Residue histidine 135 coordinates substrate. 3 residues coordinate pyridoxal 5'-phosphate: serine 181, histidine 209, and threonine 238. Lysine 241 carries the N6-(pyridoxal phosphate)lysine modification. Threonine 355 contacts substrate.

Belongs to the class-II pyridoxal-phosphate-dependent aminotransferase family. BioF subfamily. As to quaternary structure, homodimer. It depends on pyridoxal 5'-phosphate as a cofactor.

The enzyme catalyses 6-carboxyhexanoyl-[ACP] + L-alanine + H(+) = (8S)-8-amino-7-oxononanoate + holo-[ACP] + CO2. It functions in the pathway cofactor biosynthesis; biotin biosynthesis. In terms of biological role, catalyzes the decarboxylative condensation of pimeloyl-[acyl-carrier protein] and L-alanine to produce 8-amino-7-oxononanoate (AON), [acyl-carrier protein], and carbon dioxide. This chain is 8-amino-7-oxononanoate synthase, found in Cellvibrio japonicus (strain Ueda107) (Pseudomonas fluorescens subsp. cellulosa).